The following is a 367-amino-acid chain: Gelsolin-like protein 1 (367 aa).

The tract at residues 1 to 185 (MATGLIKAKE…GQKQQIYVHE (185 aa)) is actin binding. Gelsolin-like repeat units lie at residues 56-141 (NFKV…ELFR) and 179-225 (QQIY…KAMQ). The segment at 106-109 (DEYG) is actin-actin interfilament contact point. The segment at 186-295 (VPLVKERLDH…LKTTEVKRGA (110 aa)) is actin binding, Actin-severing. A disordered region spans residues 235 to 257 (PKAEAETLEDESTPESHKFYTSL). One copy of the Gelsolin-like 3 repeat lies at 287–322 (KTTEVKRGAVNSKDFSSNDVFILDTGDQCFVWVGKG). The actin-severing, Ca-sensitive stretch occupies residues 296-366 (VNSKDFSSND…LCKAFNVAIA (71 aa)).

Belongs to the villin/gelsolin family. Interacts with actin monomers and filaments. As to expression, expressed in circular and longitudinal muscle, pseudohearts, pharynx and gizzard. Also expressed in male germ cells at the proximal pole of primary spermatocytes in 16 cell-stage morulae, and in the distal parts of the spermatocytes in 32 and 64 cell-stage morulae. In the spermatids of the 128 cell-stage morulae it is expressed at the proximal pole of the elongated nucleus and the distal pole near the base of the flagellae.

The protein localises to the cytoplasm. It is found in the cytoskeleton. Its function is as follows. Calcium-regulated protein that binds to the plus (or barbed) ends of actin monomers or filaments, preventing monomer exchange (end-blocking or capping). Can promote the assembly of monomers into filaments (nucleation) as well as sever existing filaments. The chain is Gelsolin-like protein 1 from Lumbricus terrestris (Common earthworm).